A 629-amino-acid chain; its full sequence is DNA mismatch repair protein MutL (629 aa).

The protein belongs to the DNA mismatch repair MutL/HexB family.

Its function is as follows. This protein is involved in the repair of mismatches in DNA. It is required for dam-dependent methyl-directed DNA mismatch repair. May act as a 'molecular matchmaker', a protein that promotes the formation of a stable complex between two or more DNA-binding proteins in an ATP-dependent manner without itself being part of a final effector complex. The sequence is that of DNA mismatch repair protein MutL from Rhodospirillum rubrum (strain ATCC 11170 / ATH 1.1.1 / DSM 467 / LMG 4362 / NCIMB 8255 / S1).